A 130-amino-acid polypeptide reads, in one-letter code: S-adenosylmethionine decarboxylase proenzyme (130 aa).

The active-site Schiff-base intermediate with substrate; via pyruvic acid is Ser-63. A Pyruvic acid (Ser); by autocatalysis modification is found at Ser-63. The Proton acceptor; for processing activity role is filled by His-68. Cys-83 serves as the catalytic Proton donor; for catalytic activity.

Belongs to the prokaryotic AdoMetDC family. Type 1 subfamily. As to quaternary structure, heterotetramer of two alpha and two beta chains arranged as a dimer of alpha/beta heterodimers. Pyruvate serves as cofactor. In terms of processing, is synthesized initially as an inactive proenzyme. Formation of the active enzyme involves a self-maturation process in which the active site pyruvoyl group is generated from an internal serine residue via an autocatalytic post-translational modification. Two non-identical subunits are generated from the proenzyme in this reaction, and the pyruvate is formed at the N-terminus of the alpha chain, which is derived from the carboxyl end of the proenzyme. The post-translation cleavage follows an unusual pathway, termed non-hydrolytic serinolysis, in which the side chain hydroxyl group of the serine supplies its oxygen atom to form the C-terminus of the beta chain, while the remainder of the serine residue undergoes an oxidative deamination to produce ammonia and the pyruvoyl group blocking the N-terminus of the alpha chain.

The enzyme catalyses S-adenosyl-L-methionine + H(+) = S-adenosyl 3-(methylsulfanyl)propylamine + CO2. It functions in the pathway amine and polyamine biosynthesis; S-adenosylmethioninamine biosynthesis; S-adenosylmethioninamine from S-adenosyl-L-methionine: step 1/1. Its function is as follows. Catalyzes the decarboxylation of S-adenosylmethionine to S-adenosylmethioninamine (dcAdoMet), the propylamine donor required for the synthesis of the polyamines spermine and spermidine from the diamine putrescine. The polypeptide is S-adenosylmethionine decarboxylase proenzyme (Thermotoga petrophila (strain ATCC BAA-488 / DSM 13995 / JCM 10881 / RKU-1)).